The primary structure comprises 116 residues: uncharacterized protein (116 aa).

Residues 1–15 (MKKYFLILASFMLVA) form the signal peptide.

This is an uncharacterized protein from Haemophilus influenzae (strain ATCC 51907 / DSM 11121 / KW20 / Rd).